Reading from the N-terminus, the 304-residue chain is NADH-cytochrome b5 reductase 2 (304 aa).

A helical membrane pass occupies residues 6–26 (GTPVVVAVAAVAATVLLLLLL). In terms of domain architecture, FAD-binding FR-type spans 43–155 (QAKYPLPLVG…RGPNGLLVYK (113 aa)). Residues 135–165 (DSMK…IKPD) and 174–209 (FAKH…KCYL) each bind FAD.

It belongs to the flavoprotein pyridine nucleotide cytochrome reductase family. It depends on FAD as a cofactor.

Its subcellular location is the membrane. It catalyses the reaction 2 Fe(III)-[cytochrome b5] + NADH = 2 Fe(II)-[cytochrome b5] + NAD(+) + H(+). NADH-cytochrome b5 reductases are involved in desaturation and elongation of fatty acids, cholesterol biosynthesis and drug metabolism. The polypeptide is NADH-cytochrome b5 reductase 2 (CYB5R2) (Gallus gallus (Chicken)).